The chain runs to 146 residues: Mediator of RNA polymerase II transcription subunit 10 (146 aa).

The protein belongs to the Mediator complex subunit 10 family. In terms of assembly, component of the Mediator complex.

Its subcellular location is the nucleus. In terms of biological role, component of the Mediator complex, a coactivator involved in the regulated transcription of nearly all RNA polymerase II-dependent genes. Mediator functions as a bridge to convey information from gene-specific regulatory proteins to the basal RNA polymerase II transcription machinery. Mediator is recruited to promoters by direct interactions with regulatory proteins and serves as a scaffold for the assembly of a functional preinitiation complex with RNA polymerase II and the general transcription factors. The polypeptide is Mediator of RNA polymerase II transcription subunit 10 (NUT2) (Scheffersomyces stipitis (strain ATCC 58785 / CBS 6054 / NBRC 10063 / NRRL Y-11545) (Yeast)).